The chain runs to 628 residues: Translation factor GUF1, mitochondrial (628 aa).

One can recognise a tr-type G domain in the interval 27–209; the sequence is LPSRNFSIIA…AIISRIPPPS (183 aa). Residues 36 to 43, 102 to 106, and 156 to 159 contribute to the GTP site; these read AHIDHGKS, DTPGH, and NKID.

The protein belongs to the TRAFAC class translation factor GTPase superfamily. Classic translation factor GTPase family. LepA subfamily.

It localises to the mitochondrion inner membrane. It carries out the reaction GTP + H2O = GDP + phosphate + H(+). Its function is as follows. Promotes mitochondrial protein synthesis. May act as a fidelity factor of the translation reaction, by catalyzing a one-codon backward translocation of tRNAs on improperly translocated ribosomes. Binds to mitochondrial ribosomes in a GTP-dependent manner. This Laccaria bicolor (strain S238N-H82 / ATCC MYA-4686) (Bicoloured deceiver) protein is Translation factor GUF1, mitochondrial.